The sequence spans 281 residues: Beta-lactamase (281 aa).

An N-terminal signal peptide occupies residues 1–24; that stretch reads MKKLIFLIVIALVLSACNSNSSHA. The Acyl-ester intermediate role is filled by Ser-63. 225 to 227 provides a ligand contact to substrate; that stretch reads KSG.

This sequence belongs to the class-A beta-lactamase family.

The enzyme catalyses a beta-lactam + H2O = a substituted beta-amino acid. The sequence is that of Beta-lactamase (blaZ) from Staphylococcus aureus.